Consider the following 643-residue polypeptide: Phosphomethylpyrimidine synthase (643 aa).

Residues N248, M277, Y306, H342, 362-364 (SRG), 403-406 (DGLR), and E442 each bind substrate. H446 contributes to the Zn(2+) binding site. Y469 is a substrate binding site. A Zn(2+)-binding site is contributed by H510. Positions 590, 593, and 598 each coordinate [4Fe-4S] cluster.

The protein belongs to the ThiC family. As to quaternary structure, homodimer. The cofactor is [4Fe-4S] cluster.

It catalyses the reaction 5-amino-1-(5-phospho-beta-D-ribosyl)imidazole + S-adenosyl-L-methionine = 4-amino-2-methyl-5-(phosphooxymethyl)pyrimidine + CO + 5'-deoxyadenosine + formate + L-methionine + 3 H(+). It participates in cofactor biosynthesis; thiamine diphosphate biosynthesis. In terms of biological role, catalyzes the synthesis of the hydroxymethylpyrimidine phosphate (HMP-P) moiety of thiamine from aminoimidazole ribotide (AIR) in a radical S-adenosyl-L-methionine (SAM)-dependent reaction. This Burkholderia ambifaria (strain MC40-6) protein is Phosphomethylpyrimidine synthase.